The chain runs to 136 residues: Histone H3.3C-like (136 aa).

Position 3 is an asymmetric dimethylarginine; by PRMT6; alternate (R3). Residue R3 is modified to Citrulline; alternate. Phosphothreonine; by HASPIN is present on T4. K5 bears the Allysine; alternate mark. K5 is modified (N6,N6,N6-trimethyllysine; alternate). K5 is modified (N6,N6-dimethyllysine; alternate). K5 bears the N6-(2-hydroxyisobutyryl)lysine; alternate mark. The residue at position 5 (K5) is an N6-(beta-hydroxybutyryl)lysine; alternate. Residue K5 is modified to N6-acetyllysine; alternate. K5 bears the N6-methyllysine; alternate mark. At T7 the chain carries Phosphothreonine; by PKC. K10 carries the post-translational modification N6,N6,N6-trimethyllysine; alternate. N6,N6-dimethyllysine; alternate is present on K10. K10 carries the N6-(2-hydroxyisobutyryl)lysine; alternate modification. An N6-acetyllysine; alternate modification is found at K10. At K10 the chain carries N6-methyllysine; alternate. The residue at position 11 (S11) is an ADP-ribosylserine; alternate. S11 is modified (phosphoserine; alternate; by AURKB, AURKC, RPS6KA3, RPS6KA4 and RPS6KA5). T12 carries the phosphothreonine; by PKC modification. At K15 the chain carries N6-(2-hydroxyisobutyryl)lysine; alternate. K15 is subject to N6-(beta-hydroxybutyryl)lysine; alternate. N6-acetyllysine; alternate is present on K15. The residue at position 15 (K15) is an N6-glutaryllysine; alternate. K15 carries the post-translational modification N6-succinyllysine; alternate. R18 carries the post-translational modification Citrulline; alternate. Residue R18 is modified to Asymmetric dimethylarginine; by CARM1; alternate. An N6-(2-hydroxyisobutyryl)lysine; alternate mark is found at K19 and K28. N6-(beta-hydroxybutyryl)lysine; alternate is present on K19. An N6-acetyllysine; alternate mark is found at K19 and K28. An N6-methyllysine; alternate mark is found at K19 and K28. N6-glutaryllysine; alternate is present on residues K19 and K28. Residue K19 is modified to N6-butyryllysine; alternate. The residue at position 28 (K28) is an N6,N6,N6-trimethyllysine; alternate. N6,N6-dimethyllysine; alternate is present on K28. Position 29 is an ADP-ribosylserine; alternate (S29). Position 29 is a phosphoserine; alternate; by AURKB, AURKC and RPS6KA5 (S29). S32 is modified (phosphoserine). An N6-methyllysine modification is found at K38. Y42 is modified (phosphotyrosine). An N6,N6,N6-trimethyllysine; alternate modification is found at K57. The residue at position 57 (K57) is an N6-(2-hydroxyisobutyryl)lysine; alternate. K57 carries the post-translational modification N6-(beta-hydroxybutyryl)lysine; alternate. K57 carries the post-translational modification N6-acetyllysine; alternate. K57 carries the N6-glutaryllysine; alternate modification. At K57 the chain carries N6-succinyllysine; alternate. An N6-methyllysine; by EHMT2; alternate modification is found at K57. The residue at position 58 (S58) is a Phosphoserine. K65 and K80 each carry N6-(2-hydroxyisobutyryl)lysine; alternate. N6-methyllysine; alternate occurs at positions 65 and 80. The residue at position 80 (K80) is an N6,N6,N6-trimethyllysine; alternate. N6,N6-dimethyllysine; alternate is present on K80. K80 bears the N6-acetyllysine; alternate mark. An N6-glutaryllysine; alternate modification is found at K80. Position 80 is an N6-succinyllysine; alternate (K80). Residue T81 is modified to Phosphothreonine. A Phosphoserine modification is found at S87.

It belongs to the histone H3 family. As to quaternary structure, the nucleosome is a histone octamer containing two molecules each of H2A, H2B, H3 and H4 assembled in one H3-H4 heterotetramer and two H2A-H2B heterodimers. The octamer wraps approximately 147 bp of DNA. In terms of processing, acetylation is generally linked to gene activation. Acetylation on Lys-19 favors methylation at Arg-18. Citrullination at Arg-18 by PADI4 impairs methylation and represses transcription. Post-translationally, asymmetric dimethylation at Arg-18 (H3R17me2a) by CARM1 is linked to gene activation. Asymmetric dimethylation at Arg-3 (H3R2me2a) by PRMT6 is linked to gene repression and is mutually exclusive with H3 Lys-5 methylation (H3K4me2 and H3K4me3). H3R2me2a is present at the 3' of genes regardless of their transcription state and is enriched on inactive promoters, while it is absent on active promoters. In terms of processing, methylation at Lys-5 (H3K4me) and Lys-80 (H3K79me) are linked to gene activation. Methylation at Lys-5 (H3K4me) facilitates subsequent acetylation of H3 and H4. Methylation at Lys-80 (H3K79me) is associated with DNA double-strand break (DSB) responses and is a specific target for TP53BP1. Methylation at Lys-10 (H3K9me) and Lys-28 (H3K27me) are linked to gene repression. Methylation at Lys-10 (H3K9me) is a specific target for HP1 proteins (CBX1, CBX3 and CBX5) and prevents subsequent phosphorylation at Ser-11 (H3S10ph) and acetylation of H3 and H4. Methylation at Lys-5 (H3K4me) and Lys-80 (H3K79me) require preliminary monoubiquitination of H2B at 'Lys-120'. Methylation at Lys-10 (H3K9me) and Lys-28 (H3K27me) are enriched in inactive X chromosome chromatin. Monomethylation at Lys-57 (H3K56me1) by EHMT2/G9A in G1 phase promotes interaction with PCNA and is required for DNA replication. Phosphorylated at Thr-4 (H3T3ph) by HASPIN during prophase and dephosphorylated during anaphase. Phosphorylation at Ser-11 (H3S10ph) by AURKB is crucial for chromosome condensation and cell-cycle progression during mitosis and meiosis. In addition phosphorylation at Ser-11 (H3S10ph) by RPS6KA4 and RPS6KA5 is important during interphase because it enables the transcription of genes following external stimulation, like mitogens, stress, growth factors or UV irradiation and result in the activation of genes, such as c-fos and c-jun. Phosphorylation at Ser-11 (H3S10ph), which is linked to gene activation, prevents methylation at Lys-10 (H3K9me) but facilitates acetylation of H3 and H4. Phosphorylation at Ser-11 (H3S10ph) by AURKB mediates the dissociation of HP1 proteins (CBX1, CBX3 and CBX5) from heterochromatin. Phosphorylation at Ser-11 (H3S10ph) is also an essential regulatory mechanism for neoplastic cell transformation. Phosphorylated at Ser-29 (H3S28ph) by MAP3K20 isoform 1, RPS6KA5 or AURKB during mitosis or upon ultraviolet B irradiation. Phosphorylation at Thr-7 (H3T6ph) by PRKCB is a specific tag for epigenetic transcriptional activation that prevents demethylation of Lys-5 (H3K4me) by LSD1/KDM1A. At centromeres, specifically phosphorylated at Thr-12 (H3T11ph) from prophase to early anaphase, by DAPK3 and PKN1. Phosphorylation at Thr-12 (H3T11ph) by PKN1 or isoform M2 of PKM (PKM2) is a specific tag for epigenetic transcriptional activation that promotes demethylation of Lys-10 (H3K9me) by KDM4C/JMJD2C. Phosphorylation at Tyr-42 (H3Y41ph) by JAK2 promotes exclusion of CBX5 (HP1 alpha) from chromatin. Post-translationally, lysine deamination at Lys-5 (H3K4all) to form allysine is mediated by LOXL2. Allysine formation by LOXL2 only takes place on H3K4me3 and results in gene repression. In terms of processing, butyrylation of histones marks active promoters and competes with histone acetylation. It is present during late spermatogenesis. Succinylation at Lys-80 (H3K79succ) by KAT2A takes place with a maximum frequency around the transcription start sites of genes. It gives a specific tag for epigenetic transcription activation. Post-translationally, serine ADP-ribosylation constitutes the primary form of ADP-ribosylation of proteins in response to DNA damage. Serine ADP-ribosylation at Ser-11 (H3S10ADPr) is mutually exclusive with phosphorylation at Ser-11 (H3S10ph) and impairs acetylation at Lys-10 (H3K9ac).

The protein localises to the nucleus. It localises to the chromosome. Its function is as follows. Core component of nucleosome. Nucleosomes wrap and compact DNA into chromatin, limiting DNA accessibility to the cellular machineries which require DNA as a template. Histones thereby play a central role in transcription regulation, DNA repair, DNA replication and chromosomal stability. DNA accessibility is regulated via a complex set of post-translational modifications of histones, also called histone code, and nucleosome remodeling. In Bos taurus (Bovine), this protein is Histone H3.3C-like.